The following is a 200-amino-acid chain: Recombination protein RecR (200 aa).

A C4-type zinc finger spans residues 58–73; sequence CSLCCNLTDEDPCSIC. The Toprim domain maps to 81–176; sequence NLLCVVEEPR…KVTRIAHGIP (96 aa).

The protein belongs to the RecR family.

Functionally, may play a role in DNA repair. It seems to be involved in an RecBC-independent recombinational process of DNA repair. It may act with RecF and RecO. The sequence is that of Recombination protein RecR from Desulforamulus reducens (strain ATCC BAA-1160 / DSM 100696 / MI-1) (Desulfotomaculum reducens).